The primary structure comprises 504 residues: uncharacterized protein (504 aa).

Residues 26-46 (ILFLLLGLIILVNISINVTTV) traverse the membrane as a helical segment. Residues 103 to 112 (PTQCSSSSTH) show a composition bias toward polar residues. Disordered regions lie at residues 103–180 (PTQC…TRPM), 313–402 (YDAR…PLTT), and 431–504 (QRLA…GKLN). The span at 113–128 (YFRKHSNDRRSRRRYC) shows a compositional bias: basic residues. Polar residues predominate over residues 135 to 147 (QIRQSNQQQSCHS). The segment covering 313–324 (YDARDQWRRGTE) has biased composition (basic and acidic residues). Residues 349–377 (SSQAHRQNFPSYTHSQPNHSPPQSVGYSS) are compositionally biased toward polar residues. Basic and acidic residues-rich tracts occupy residues 378–389 (RESHEVRRRAPD) and 467–478 (LELKRQVQENRG). Positions 494 to 504 (SLHRSRTGKLN) are enriched in basic residues.

The protein localises to the membrane. This is an uncharacterized protein from Rattus norvegicus (Rat).